The sequence spans 312 residues: D-alanine--D-alanine ligase (312 aa).

The region spanning 99–304 (KKILKAEGIP…FEDLVEKILM (206 aa)) is the ATP-grasp domain. 131-186 (LQTLKLPVVIKAPREGSTIGIEFVFSKQELPKAIKKVLEIDKQLLVEEFIEGVEVT) contributes to the ATP binding site. Mg(2+)-binding residues include D257, E271, and N273.

Belongs to the D-alanine--D-alanine ligase family. It depends on Mg(2+) as a cofactor. Mn(2+) is required as a cofactor.

The protein resides in the cytoplasm. It catalyses the reaction 2 D-alanine + ATP = D-alanyl-D-alanine + ADP + phosphate + H(+). It functions in the pathway cell wall biogenesis; peptidoglycan biosynthesis. In terms of biological role, cell wall formation. This chain is D-alanine--D-alanine ligase, found in Carboxydothermus hydrogenoformans (strain ATCC BAA-161 / DSM 6008 / Z-2901).